The sequence spans 38 residues: Large ribosomal subunit protein bL36 (38 aa).

This sequence belongs to the bacterial ribosomal protein bL36 family.

In Ectopseudomonas mendocina (strain ymp) (Pseudomonas mendocina), this protein is Large ribosomal subunit protein bL36.